The primary structure comprises 782 residues: E3 ubiquitin-protein ligase SopA (782 aa).

Positions 137 to 171 are disordered; it reads VSVSANNRPTVSEGRTPPVSPSLSLQATSSPSSPA. The span at 157-171 shows a compositional bias: low complexity; that stretch reads PSLSLQATSSPSSPA. The active-site Glycyl thioester intermediate is C753.

This sequence belongs to the SopA E3 ligase family. In terms of processing, ubiquitinated in the presence of host E1 ubiquitin-activating enzyme, E2 ubiquitin-conjugating enzyme and ubiquitin.

It is found in the secreted. The protein resides in the host cell. The catalysed reaction is S-ubiquitinyl-[E2 ubiquitin-conjugating enzyme]-L-cysteine + [acceptor protein]-L-lysine = [E2 ubiquitin-conjugating enzyme]-L-cysteine + N(6)-ubiquitinyl-[acceptor protein]-L-lysine.. In terms of biological role, effector proteins function to alter host cell physiology and promote bacterial survival in host tissues. This protein is an E3 ubiquitin ligase that interferes with host's ubiquitination pathway. In Salmonella enteritidis PT4 (strain P125109), this protein is E3 ubiquitin-protein ligase SopA (sopA).